The following is a 254-amino-acid chain: 5-oxoprolinase subunit A (254 aa).

It belongs to the LamB/PxpA family. As to quaternary structure, forms a complex composed of PxpA, PxpB and PxpC.

It catalyses the reaction 5-oxo-L-proline + ATP + 2 H2O = L-glutamate + ADP + phosphate + H(+). Catalyzes the cleavage of 5-oxoproline to form L-glutamate coupled to the hydrolysis of ATP to ADP and inorganic phosphate. This Rhodopseudomonas palustris (strain ATCC BAA-98 / CGA009) protein is 5-oxoprolinase subunit A.